The sequence spans 470 residues: MNPNQKIICISATGMTLSVVSLLIGIANLGLNIGLHYKVGDTPGVNVPNENGTNSTTTIINNNTQNNFTNITNIIQTKTEEKTFLNLTKPLCEVNSWHILSKDNAIRIGEDAHILVTREPYLSCGPQGCRMFALSQGTTLRGRHANGTIHDRSPYRALISWEMGQAPSPYNTRVECIGWSSTSCHDGKSRMSICMSGPNNNASAVVWYGGRPATEIPSWAGNILRTQESECVCHNGVCPVVMTDGPANNRAATKIIYFKEGKIQKIEELTGSAQHIEECSCYGAKSVIKCICRDNWKGANRPVITIDPEMMTHTSKYLCSKILTDTSRPNDPIDGDCDAPITGGSPDPGVKGFAFLDGDNSWLGRTISKDSRSGYEMLKVPNAETSTQSGPVSHQVIVNNQNWSGYSGAFIDYWSNKECFNPCFYVELIRGRPKESSVLWTSNSIVALCGSKERLGSWSWHDGAEIIYFK.

Topologically, residues 1-6 (MNPNQK) are intravirion. The helical transmembrane segment at 7–27 (IICISATGMTLSVVSLLIGIA) threads the bilayer. Positions 11–33 (SATGMTLSVVSLLIGIANLGLNI) are involved in apical transport and lipid raft association. At 28-470 (NLGLNIGLHY…HDGAEIIYFK (443 aa)) the chain is on the virion surface side. A hypervariable stalk region region spans residues 36 to 88 (HYKVGDTPGVNVPNENGTNSTTTIINNNTQNNFTNITNIIQTKTEEKTFLNLT). N-linked (GlcNAc...) asparagine; by host glycans are attached at residues Asn51, Asn54, Asn62, Asn67, Asn70, and Asn86. Residues 91-470 (LCEVNSWHIL…HDGAEIIYFK (380 aa)) are head of neuraminidase. 8 cysteine pairs are disulfide-bonded: Cys92–Cys419, Cys124–Cys129, Cys184–Cys231, Cys233–Cys238, Cys279–Cys292, Cys281–Cys290, Cys319–Cys337, and Cys423–Cys449. Arg118 is a substrate binding site. Asn146 is a glycosylation site (N-linked (GlcNAc...) asparagine; by host). Asp151 functions as the Proton donor/acceptor in the catalytic mechanism. Arg152 contributes to the substrate binding site. Asn201 carries an N-linked (GlcNAc...) asparagine; by host glycan. Position 277–278 (277–278 (EE)) interacts with substrate. Arg293 contributes to the substrate binding site. Ca(2+) contacts are provided by Asp294, Gly298, and Asp325. Substrate is bound at residue Arg372. Asn402 is a glycosylation site (N-linked (GlcNAc...) asparagine; by host). Tyr406 functions as the Nucleophile in the catalytic mechanism.

It belongs to the glycosyl hydrolase 34 family. In terms of assembly, homotetramer. It depends on Ca(2+) as a cofactor. In terms of processing, N-glycosylated.

The protein localises to the virion membrane. Its subcellular location is the host apical cell membrane. The catalysed reaction is Hydrolysis of alpha-(2-&gt;3)-, alpha-(2-&gt;6)-, alpha-(2-&gt;8)- glycosidic linkages of terminal sialic acid residues in oligosaccharides, glycoproteins, glycolipids, colominic acid and synthetic substrates.. Inhibited by the neuraminidase inhibitors zanamivir (Relenza) and oseltamivir (Tamiflu). These drugs interfere with the release of progeny virus from infected cells and are effective against all influenza strains. Resistance to neuraminidase inhibitors is quite rare. Functionally, catalyzes the removal of terminal sialic acid residues from viral and cellular glycoconjugates. Cleaves off the terminal sialic acids on the glycosylated HA during virus budding to facilitate virus release. Additionally helps virus spread through the circulation by further removing sialic acids from the cell surface. These cleavages prevent self-aggregation and ensure the efficient spread of the progeny virus from cell to cell. Otherwise, infection would be limited to one round of replication. Described as a receptor-destroying enzyme because it cleaves a terminal sialic acid from the cellular receptors. May facilitate viral invasion of the upper airways by cleaving the sialic acid moieties on the mucin of the airway epithelial cells. Likely to plays a role in the budding process through its association with lipid rafts during intracellular transport. May additionally display a raft-association independent effect on budding. Plays a role in the determination of host range restriction on replication and virulence. Sialidase activity in late endosome/lysosome traffic seems to enhance virus replication. This chain is Neuraminidase, found in Aves (Pig).